Consider the following 522-residue polypeptide: Protein nucleotidyltransferase YdiU (522 aa).

Positions 109, 111, 112, 132, 144, 145, 195, and 202 each coordinate ATP. The active-site Proton acceptor is aspartate 271. Positions 272 and 281 each coordinate Mg(2+). Residue aspartate 281 coordinates ATP.

The protein belongs to the SELO family. It depends on Mg(2+) as a cofactor. Mn(2+) is required as a cofactor.

The catalysed reaction is L-seryl-[protein] + ATP = 3-O-(5'-adenylyl)-L-seryl-[protein] + diphosphate. It carries out the reaction L-threonyl-[protein] + ATP = 3-O-(5'-adenylyl)-L-threonyl-[protein] + diphosphate. It catalyses the reaction L-tyrosyl-[protein] + ATP = O-(5'-adenylyl)-L-tyrosyl-[protein] + diphosphate. The enzyme catalyses L-histidyl-[protein] + UTP = N(tele)-(5'-uridylyl)-L-histidyl-[protein] + diphosphate. The catalysed reaction is L-seryl-[protein] + UTP = O-(5'-uridylyl)-L-seryl-[protein] + diphosphate. It carries out the reaction L-tyrosyl-[protein] + UTP = O-(5'-uridylyl)-L-tyrosyl-[protein] + diphosphate. In terms of biological role, nucleotidyltransferase involved in the post-translational modification of proteins. It can catalyze the addition of adenosine monophosphate (AMP) or uridine monophosphate (UMP) to a protein, resulting in modifications known as AMPylation and UMPylation. This chain is Protein nucleotidyltransferase YdiU, found in Burkholderia ambifaria (strain MC40-6).